Consider the following 56-residue polypeptide: Conotoxin reg3.9 (56 aa).

The first 8 residues, Leu1–Leu8, serve as a signal peptide directing secretion. The disordered stretch occupies residues Leu1–Arg22. The propeptide occupies Pro9 to Gly40. 3 cysteine pairs are disulfide-bonded: Cys41-Cys55, Cys42-Cys53, and Cys47-Cys56.

Belongs to the conotoxin M superfamily. In terms of tissue distribution, expressed by the venom duct.

Its subcellular location is the secreted. The chain is Conotoxin reg3.9 from Conus regius (Crown cone).